The following is a 302-amino-acid chain: uncharacterized protein (302 aa).

This is an uncharacterized protein from Ictaluridae (bullhead catfishes).